Consider the following 245-residue polypeptide: Biosynthetic peptidoglycan transglycosylase (245 aa).

A helical membrane pass occupies residues 19-41 (CLRWVLAAPLLFAAASVLQVLFL).

This sequence belongs to the glycosyltransferase 51 family.

It is found in the cell inner membrane. The catalysed reaction is [GlcNAc-(1-&gt;4)-Mur2Ac(oyl-L-Ala-gamma-D-Glu-L-Lys-D-Ala-D-Ala)](n)-di-trans,octa-cis-undecaprenyl diphosphate + beta-D-GlcNAc-(1-&gt;4)-Mur2Ac(oyl-L-Ala-gamma-D-Glu-L-Lys-D-Ala-D-Ala)-di-trans,octa-cis-undecaprenyl diphosphate = [GlcNAc-(1-&gt;4)-Mur2Ac(oyl-L-Ala-gamma-D-Glu-L-Lys-D-Ala-D-Ala)](n+1)-di-trans,octa-cis-undecaprenyl diphosphate + di-trans,octa-cis-undecaprenyl diphosphate + H(+). It functions in the pathway cell wall biogenesis; peptidoglycan biosynthesis. Peptidoglycan polymerase that catalyzes glycan chain elongation from lipid-linked precursors. The protein is Biosynthetic peptidoglycan transglycosylase of Xanthomonas oryzae pv. oryzae (strain KACC10331 / KXO85).